We begin with the raw amino-acid sequence, 189 residues long: Protein GrpE (189 aa).

Basic residues predominate over residues 1–12; it reads MDKKKHGSHAGA. The interval 1-36 is disordered; the sequence is MDKKKHGSHAGAHHTDEPAAETVAPAAEGAPAAADR. Residues 20–34 are compositionally biased toward low complexity; that stretch reads AETVAPAAEGAPAAA.

The protein belongs to the GrpE family. As to quaternary structure, homodimer.

The protein resides in the cytoplasm. Participates actively in the response to hyperosmotic and heat shock by preventing the aggregation of stress-denatured proteins, in association with DnaK and GrpE. It is the nucleotide exchange factor for DnaK and may function as a thermosensor. Unfolded proteins bind initially to DnaJ; upon interaction with the DnaJ-bound protein, DnaK hydrolyzes its bound ATP, resulting in the formation of a stable complex. GrpE releases ADP from DnaK; ATP binding to DnaK triggers the release of the substrate protein, thus completing the reaction cycle. Several rounds of ATP-dependent interactions between DnaJ, DnaK and GrpE are required for fully efficient folding. The sequence is that of Protein GrpE from Geobacter metallireducens (strain ATCC 53774 / DSM 7210 / GS-15).